The chain runs to 115 residues: NAD(P)H-quinone oxidoreductase subunit M (115 aa).

This sequence belongs to the complex I NdhM subunit family. NDH-1 can be composed of about 15 different subunits; different subcomplexes with different compositions have been identified which probably have different functions.

It localises to the cellular thylakoid membrane. It carries out the reaction a plastoquinone + NADH + (n+1) H(+)(in) = a plastoquinol + NAD(+) + n H(+)(out). It catalyses the reaction a plastoquinone + NADPH + (n+1) H(+)(in) = a plastoquinol + NADP(+) + n H(+)(out). Its function is as follows. NDH-1 shuttles electrons from an unknown electron donor, via FMN and iron-sulfur (Fe-S) centers, to quinones in the respiratory and/or the photosynthetic chain. The immediate electron acceptor for the enzyme in this species is believed to be plastoquinone. Couples the redox reaction to proton translocation, and thus conserves the redox energy in a proton gradient. Cyanobacterial NDH-1 also plays a role in inorganic carbon-concentration. This Trichodesmium erythraeum (strain IMS101) protein is NAD(P)H-quinone oxidoreductase subunit M.